Reading from the N-terminus, the 152-residue chain is Psoriasis susceptibility 1 candidate gene 1 protein (152 aa).

The segment covering 1–31 (MTCTDQKSHSQRALGTQTPALQGPQLLNTDP) has biased composition (polar residues). The tract at residues 1–42 (MTCTDQKSHSQRALGTQTPALQGPQLLNTDPSSEETRPPHVN) is disordered.

As to expression, expressed in skin. Also found in heart, placenta, liver, skeletal muscle and pancreas.

This chain is Psoriasis susceptibility 1 candidate gene 1 protein (PSORS1C1), found in Homo sapiens (Human).